The primary structure comprises 274 residues: uncharacterized protein (274 aa).

One can recognise a C2 NT-type domain in the interval 3–141 (IFIPKARRPT…TIRIGISLKQ (139 aa)).

This sequence to yeast YBL086c.

This is an uncharacterized protein from Schizosaccharomyces pombe (strain 972 / ATCC 24843) (Fission yeast).